A 187-amino-acid chain; its full sequence is Large ribosomal subunit protein uL6 (187 aa).

This sequence belongs to the universal ribosomal protein uL6 family. As to quaternary structure, part of the 50S ribosomal subunit.

In terms of biological role, this protein binds to the 23S rRNA, and is important in its secondary structure. It is located near the subunit interface in the base of the L7/L12 stalk, and near the tRNA binding site of the peptidyltransferase center. The chain is Large ribosomal subunit protein uL6 from Roseiflexus sp. (strain RS-1).